We begin with the raw amino-acid sequence, 1132 residues long: Large proline-rich protein BAG6 (1132 aa).

Methionine 1 is subject to N-acetylmethionine. A Ubiquitin-like domain is found at 17–92 (LEVLVKTLDS…HLVERAPPQT (76 aa)). 2 disordered regions span residues 87–126 (RAPP…SVHD) and 189–272 (LQCR…NHPS). Low complexity predominate over residues 95–108 (PSGASSGTGSASAT). A phosphoserine mark is found at serine 96 and serine 113. Threonine 117 bears the Phosphothreonine mark. Composition is skewed to pro residues over residues 200 to 210 (SQPPPQPPAVT) and 251 to 262 (TPGPAPAGPTPA). Residues 242–270 (RAPAQNPELTPGPAPAGPTPAPETNAPNH) form repeat 1. The segment at 242 to 636 (RAPAQNPELT…VASPTITVAM (395 aa)) is 4 X 29 AA approximate repeats. Threonine 350 is subject to Phosphothreonine. Disordered stretches follow at residues 385-441 (VTMT…TSHP), 461-528 (IQDS…TLQG), and 560-603 (PGMA…PSMA). A compositionally biased stretch (pro residues) spans 393 to 407 (RPPPTPNAEAPPPGP). The span at 408-426 (GQASSVAPSSTNVESSAEG) shows a compositional bias: low complexity. The stretch at 415–443 (PSSTNVESSAEGAPPPGPAPPPATSHPRV) is repeat 2. Pro residues-rich tracts occupy residues 427-438 (APPPGPAPPPAT) and 507-520 (PTPP…PGGP). Over residues 569 to 586 (ATASASAGTTNTATTAGP) the composition is skewed to low complexity. 2 tandem repeats follow at residues 574–602 (SAGT…QPSM) and 608–636 (SQLL…TVAM). Positions 588 to 599 (PGGPAQPPPTPQ) are enriched in pro residues. Residues 651–692 (QATQTAPPPPPPPPPPPPAPEQQTMPPPGSPSGGAGSPGGLG) form a disordered region. Residues 656-680 (APPPPPPPPPPPPAPEQQTMPPPGS) show a composition bias toward pro residues. The segment covering 681–692 (PSGGAGSPGGLG) has biased composition (gly residues). Valine 832, serine 964, and serine 973 each carry phosphoserine. Residues 947–1132 (PQPLPEEPME…NAQRAFADDP (186 aa)) form a disordered region. The segment covering 1005–1020 (AETEPWAAAVPPEWVP) has biased composition (low complexity). The segment at 1010–1040 (WAAAVPPEWVPIIQQDIQSQRKVKPQPPLSD) is required for interaction with GET4. The Nuclear localization site signature appears at 1012-1054 (AAVPPEWVPIIQQDIQSQRKVKPQPPLSDAYLSGMPAKRRKTM). The interval 1022-1132 (IQQDIQSQRK…NAQRAFADDP (111 aa)) is sufficient for the delivery of client proteins to the endoplasmic reticulum. At threonine 1053 the chain carries Phosphothreonine. The tract at residues 1058–1115 (GPQLLLSEAVSRAAKAAGARPLTSPESLSRDLEAPEVQESYRQQLRSDIQKRLQEDPN) is BAG-similar domain, required and sufficient for interaction with UBL4A. Residues 1066–1076 (AVSRAAKAAGA) show a composition bias toward low complexity. 2 positions are modified to phosphoserine: serine 1081 and serine 1117.

Component of the BAG6/BAT3 complex, also named BAT3 complex, at least composed of BAG6, UBL4A and GET4/TRC35. Interacts with GET4; the interaction is direct and localizes BAG6 in the cytosol. Interacts with UBL4A; the interaction is direct and required for UBL4A protein stability. Interacts with AIFM1. Interacts with HSPA2. Interacts with CTCFL. Interacts with p300/EP300. Interacts (via ubiquitin-like domain) with RNF126; required for BAG6-dependent ubiquitination of proteins mislocalized to the cytosol. Interacts (via ubiquitin-like domain) with SGTA; SGTA competes with RNF126 by binding the same region of BAG6, thereby promoting deubiquitination of BAG6-target proteins and rescuing them from degradation. Interacts with ricin A chain. Interacts with VCP and AMFR; both form the VCP/p97-AMFR/gp78 complex. Interacts with SYVN1. Interacts with USP13; the interaction is direct and may mediate UBL4A deubiquitination. Interacts with ZFAND2B. Interacts with KPNA2. Interacts with UBQLN4. In terms of assembly, (Microbial infection) Interacts with L.pneumophila Lpg2160 and LegU1 proteins. Post-translationally, ricin can induce a cleavage by the caspase CASP3. The released C-terminal peptide induces apoptosis. (Microbial infection) In case of infection by L.pneumophila, ubiquitinated by the SCF(LegU1) complex. As to expression, expressed by immature dendritic cells (at protein level).

It is found in the cytoplasm. The protein resides in the cytosol. Its subcellular location is the nucleus. It localises to the secreted. The protein localises to the extracellular exosome. ATP-independent molecular chaperone preventing the aggregation of misfolded and hydrophobic patches-containing proteins. Functions as part of a cytosolic protein quality control complex, the BAG6/BAT3 complex, which maintains these client proteins in a soluble state and participates in their proper delivery to the endoplasmic reticulum or alternatively can promote their sorting to the proteasome where they undergo degradation. The BAG6/BAT3 complex is involved in the post-translational delivery of tail-anchored/type II transmembrane proteins to the endoplasmic reticulum membrane. Recruited to ribosomes, it interacts with the transmembrane region of newly synthesized tail-anchored proteins and together with SGTA and ASNA1 mediates their delivery to the endoplasmic reticulum. Client proteins that cannot be properly delivered to the endoplasmic reticulum are ubiquitinated by RNF126, an E3 ubiquitin-protein ligase associated with BAG6 and are sorted to the proteasome. SGTA which prevents the recruitment of RNF126 to BAG6 may negatively regulate the ubiquitination and the proteasomal degradation of client proteins. Similarly, the BAG6/BAT3 complex also functions as a sorting platform for proteins of the secretory pathway that are mislocalized to the cytosol either delivering them to the proteasome for degradation or to the endoplasmic reticulum. The BAG6/BAT3 complex also plays a role in the endoplasmic reticulum-associated degradation (ERAD), a quality control mechanism that eliminates unwanted proteins of the endoplasmic reticulum through their retrotranslocation to the cytosol and their targeting to the proteasome. It maintains these retrotranslocated proteins in an unfolded yet soluble state condition in the cytosol to ensure their proper delivery to the proteasome. BAG6 is also required for selective ubiquitin-mediated degradation of defective nascent chain polypeptides by the proteasome. In this context, it may participate in the production of antigenic peptides and play a role in antigen presentation in immune response. BAG6 is also involved in endoplasmic reticulum stress-induced pre-emptive quality control, a mechanism that selectively attenuates the translocation of newly synthesized proteins into the endoplasmic reticulum and reroutes them to the cytosol for proteasomal degradation. BAG6 may ensure the proper degradation of these proteins and thereby protects the endoplasmic reticulum from protein overload upon stress. By inhibiting the polyubiquitination and subsequent proteasomal degradation of HSPA2 it may also play a role in the assembly of the synaptonemal complex during spermatogenesis. Also positively regulates apoptosis by interacting with and stabilizing the proapoptotic factor AIFM1. By controlling the steady-state expression of the IGF1R receptor, indirectly regulates the insulin-like growth factor receptor signaling pathway. Functionally, involved in DNA damage-induced apoptosis: following DNA damage, accumulates in the nucleus and forms a complex with p300/EP300, enhancing p300/EP300-mediated p53/TP53 acetylation leading to increase p53/TP53 transcriptional activity. When nuclear, may also act as a component of some chromatin regulator complex that regulates histone 3 'Lys-4' dimethylation (H3K4me2). In terms of biological role, released extracellularly via exosomes, it is a ligand of the natural killer/NK cells receptor NCR3 and stimulates NK cells cytotoxicity. It may thereby trigger NK cells cytotoxicity against neighboring tumor cells and immature myeloid dendritic cells (DC). Its function is as follows. Mediates ricin-induced apoptosis. This chain is Large proline-rich protein BAG6, found in Homo sapiens (Human).